The sequence spans 677 residues: DNA gyrase subunit B, novobiocin-resistant (677 aa).

Positions 1 to 23 are disordered; that stretch reads MTTYDTRTATDTRGSEQPGHVGT. The novobiocin-binding stretch occupies residues 154 to 295; that stretch reads IWTDGHRWTQ…RLLSAEIALQ (142 aa). Positions 456-570 constitute a Toprim domain; the sequence is SEIFIVEGDS…EGHVHLSRPP (115 aa). Mg(2+)-binding residues include Glu462, Asp535, and Asp537.

The protein belongs to the type II topoisomerase GyrB family. Heterotetramer, composed of two GyrA and two GyrB chains. In the heterotetramer, GyrA contains the active site tyrosine that forms a transient covalent intermediate with DNA, while GyrB binds cofactors and catalyzes ATP hydrolysis. It depends on Mg(2+) as a cofactor. Mn(2+) is required as a cofactor. Requires Ca(2+) as cofactor.

Its subcellular location is the cytoplasm. It catalyses the reaction ATP-dependent breakage, passage and rejoining of double-stranded DNA.. Functionally, a type II topoisomerase that negatively supercoils closed circular double-stranded (ds) DNA in an ATP-dependent manner to modulate DNA topology and maintain chromosomes in an underwound state. Negative supercoiling favors strand separation, and DNA replication, transcription, recombination and repair, all of which involve strand separation. Also able to catalyze the interconversion of other topological isomers of dsDNA rings, including catenanes and knotted rings. Type II topoisomerases break and join 2 DNA strands simultaneously in an ATP-dependent manner. In Streptomyces niveus (Streptomyces spheroides), this protein is DNA gyrase subunit B, novobiocin-resistant.